A 427-amino-acid polypeptide reads, in one-letter code: Dihydroorotase (427 aa).

Zn(2+)-binding residues include His60 and His62. Residues His62–Arg64 and Asn94 each bind substrate. Zn(2+) is bound by residues Asp152, His179, and His232. Position 278 (Asn278) interacts with substrate. Asp305 lines the Zn(2+) pocket. Asp305 is an active-site residue. Residues His309 and Phe323–Gly324 contribute to the substrate site.

This sequence belongs to the metallo-dependent hydrolases superfamily. DHOase family. Class I DHOase subfamily. It depends on Zn(2+) as a cofactor.

The catalysed reaction is (S)-dihydroorotate + H2O = N-carbamoyl-L-aspartate + H(+). It functions in the pathway pyrimidine metabolism; UMP biosynthesis via de novo pathway; (S)-dihydroorotate from bicarbonate: step 3/3. In terms of biological role, catalyzes the reversible cyclization of carbamoyl aspartate to dihydroorotate. The sequence is that of Dihydroorotase from Bacillus caldolyticus.